Here is a 362-residue protein sequence, read N- to C-terminus: Aminomethyltransferase (362 aa).

Belongs to the GcvT family. The glycine cleavage system is composed of four proteins: P, T, L and H.

It catalyses the reaction N(6)-[(R)-S(8)-aminomethyldihydrolipoyl]-L-lysyl-[protein] + (6S)-5,6,7,8-tetrahydrofolate = N(6)-[(R)-dihydrolipoyl]-L-lysyl-[protein] + (6R)-5,10-methylene-5,6,7,8-tetrahydrofolate + NH4(+). Functionally, the glycine cleavage system catalyzes the degradation of glycine. This Porphyromonas gingivalis (strain ATCC 33277 / DSM 20709 / CIP 103683 / JCM 12257 / NCTC 11834 / 2561) protein is Aminomethyltransferase.